A 118-amino-acid chain; its full sequence is Large ribosomal subunit protein uL24 (118 aa).

This sequence belongs to the universal ribosomal protein uL24 family. In terms of assembly, part of the 50S ribosomal subunit.

Its function is as follows. One of two assembly initiator proteins, it binds directly to the 5'-end of the 23S rRNA, where it nucleates assembly of the 50S subunit. Functionally, one of the proteins that surrounds the polypeptide exit tunnel on the outside of the subunit. The protein is Large ribosomal subunit protein uL24 of Prochlorococcus marinus (strain MIT 9515).